Consider the following 691-residue polypeptide: Histone-lysine N-methyltransferase Set8 (691 aa).

The tract at residues 1-29 (MIMVRRRQRPAKEAASSSSGGASSGSGIP) is disordered. The segment covering 14-27 (AASSSSGGASSGSG) has biased composition (low complexity). A phosphoserine mark is found at Ser195 and Ser250. Residue Thr252 is modified to Phosphothreonine. Ser281 is modified (phosphoserine). 4 disordered regions span residues 341–363 (TANT…HRIL), 382–401 (GSAD…TTTA), 407–437 (KSRR…QQQQ), and 464–516 (AEER…ATNG). Thr344 bears the Phosphothreonine mark. Residues Ser346, Ser383, Ser388, and Ser392 each carry the phosphoserine modification. Composition is skewed to polar residues over residues 421-430 (YQPQLQKPPS) and 471-481 (NKAPATANSNK). The SET domain maps to 555–676 (DGLQVRHFMG…PGEELTYDYG (122 aa)). Residues 565–567 (KGR), Tyr610, and 637–638 (NH) contribute to the S-adenosyl-L-methionine site.

It belongs to the class V-like SAM-binding methyltransferase superfamily. Histone-lysine methyltransferase family. PR/SET subfamily.

The protein localises to the nucleus. It localises to the chromosome. The catalysed reaction is L-lysyl(20)-[histone H4] + S-adenosyl-L-methionine = N(6)-methyl-L-lysyl(20)-[histone H4] + S-adenosyl-L-homocysteine + H(+). Its function is as follows. Histone methyltransferase that specifically monomethylates 'Lys-20' of histone H4. H4 'Lys-20' monomethylation is enriched during mitosis and represents a specific tag for epigenetic transcriptional repression. Mainly functions in euchromatin regions, thereby playing a central role in the silencing of euchromatic genes. Required for cell proliferation, possibly by contributing to the maintenance of proper higher-order structure of DNA and chromosome condensation during mitosis. The polypeptide is Histone-lysine N-methyltransferase Set8 (Drosophila melanogaster (Fruit fly)).